Reading from the N-terminus, the 269-residue chain is Phosphatidylglycerol--prolipoprotein diacylglyceryl transferase (269 aa).

Helical transmembrane passes span 17–37, 56–76, 92–112, 120–140, 174–194, 202–222, and 237–257; these read LKIHWYGLMYLIGIGGAWLLA, LVFWLSMGVIVGGRLGYVLFY, WKGGMSFHGGFIGVMLAALWF, FFELMDFVAPLVPIGLGAGRI, PSQLYQFALEGVALFVILWLY, MAVSGMFALFYGIFRFIVEFV, and LTMGQLLCVPMIVGGIFLIWL. Residue Arg139 participates in a 1,2-diacyl-sn-glycero-3-phospho-(1'-sn-glycerol) binding.

The protein belongs to the Lgt family.

It localises to the cell inner membrane. It catalyses the reaction L-cysteinyl-[prolipoprotein] + a 1,2-diacyl-sn-glycero-3-phospho-(1'-sn-glycerol) = an S-1,2-diacyl-sn-glyceryl-L-cysteinyl-[prolipoprotein] + sn-glycerol 1-phosphate + H(+). It functions in the pathway protein modification; lipoprotein biosynthesis (diacylglyceryl transfer). Its function is as follows. Catalyzes the transfer of the diacylglyceryl group from phosphatidylglycerol to the sulfhydryl group of the N-terminal cysteine of a prolipoprotein, the first step in the formation of mature lipoproteins. The chain is Phosphatidylglycerol--prolipoprotein diacylglyceryl transferase from Pseudomonas entomophila (strain L48).